The following is a 63-amino-acid chain: Odorranain-B1 (63 aa).

The N-terminal stretch at 1–22 (MFTTKKPLLLLFFLGIISLSVC) is a signal peptide. The propeptide occupies 23–41 (EQERDADEEDGGEVTEEEV).

This sequence belongs to the frog skin active peptide (FSAP) family. Brevinin subfamily. As to expression, expressed by the skin glands.

Its subcellular location is the secreted. The protein is Odorranain-B1 of Odorrana hainanensis (Odor frog).